We begin with the raw amino-acid sequence, 323 residues long: Viral cathepsin (323 aa).

An N-terminal signal peptide occupies residues 1-16 (MNKILFYLFVYGVVNS). The propeptide at 17 to 112 (AAYDLLKAPN…IVLDQPPGKG (96 aa)) is activation peptide. 3 disulfide bridges follow: C133/C174, C167/C207, and C262/C310. C136 is an active-site residue. The N-linked (GlcNAc...) asparagine; by host glycan is linked to N158. Active-site residues include H269 and N289.

This sequence belongs to the peptidase C1 family. Synthesized as an inactive proenzyme and activated by proteolytic removal of the inhibitory propeptide.

It catalyses the reaction Endopeptidase of broad specificity, hydrolyzing substrates of both cathepsin L and cathepsin B.. Cysteine protease that plays an essential role in host liquefaction to facilitate horizontal transmission of the virus. May participate in the degradation of foreign protein expressed by the baculovirus system. The protein is Viral cathepsin (VCATH) of Helicoverpa zea (Corn earworm moth).